The following is a 300-amino-acid chain: Sulfate adenylyltransferase subunit 2 (300 aa).

A disordered region spans residues 281 to 300 (RAIDRDEAGSMEKKKREGYF).

This sequence belongs to the PAPS reductase family. CysD subfamily. As to quaternary structure, heterodimer composed of CysD, the smaller subunit, and CysN.

It carries out the reaction sulfate + ATP + H(+) = adenosine 5'-phosphosulfate + diphosphate. Its pathway is sulfur metabolism; hydrogen sulfide biosynthesis; sulfite from sulfate: step 1/3. Its function is as follows. With CysN forms the ATP sulfurylase (ATPS) that catalyzes the adenylation of sulfate producing adenosine 5'-phosphosulfate (APS) and diphosphate, the first enzymatic step in sulfur assimilation pathway. APS synthesis involves the formation of a high-energy phosphoric-sulfuric acid anhydride bond driven by GTP hydrolysis by CysN coupled to ATP hydrolysis by CysD. The protein is Sulfate adenylyltransferase subunit 2 of Brucella abortus (strain 2308).